The chain runs to 557 residues: MRSDMIKKGFDKAPHRSLLKATGLKDEDFDKPFIAICNSFIEIIPGHKHLNEFGKLVKEAVRAAGMVPFEFNTIGVDDGIAMGHIGMRYSLPSREIIADSVETVVNAHWFDGMICIPNCDKITPGMMMAALRINIPTVFVSGGPMAAGKTSKGEVVDLSSVFEGVGAYQSGKISEEELKDIEDHGCPSCGSCSGMFTANSMNCLCEVLGLALPGNGSILAIDPRREELIKQAAEKLKILIERDIKPRDIVTEEAIDDAFALDMAMGGSTNTVLHTLALAHEAGLDYDMSRIDAVSRRVPHLCKVSPASNWHMEDIDRAGGISAILKEMSRKEGVLHLDRITATGQTLRENIAHAEIKDKEVIHSLENPHSEEGGLRILKGNLAKDGAVIKSGATEVKRFEGPCVIFNSQDEALAGIMLGKVKKGDVVVIRYEGPRGGPGMPEMLAPTSAIAGMGLGADVALLTDGRFSGASRGISVGHISPEAAAGGTIALLEQGDIVCIDVEERLLEVRVSDEELDKRKKEWKRPEPKVKTGWLGRYAQMVTSANTGAVLKVPNFD.

Asp78 lines the Mg(2+) pocket. Cys119 serves as a coordination point for [2Fe-2S] cluster. Residues Asp120 and Lys121 each coordinate Mg(2+). Lys121 carries the post-translational modification N6-carboxylysine. Cys192 is a binding site for [2Fe-2S] cluster. Glu442 provides a ligand contact to Mg(2+). The active-site Proton acceptor is the Ser468.

Belongs to the IlvD/Edd family. Homodimer. It depends on [2Fe-2S] cluster as a cofactor. The cofactor is Mg(2+).

It carries out the reaction (2R)-2,3-dihydroxy-3-methylbutanoate = 3-methyl-2-oxobutanoate + H2O. The catalysed reaction is (2R,3R)-2,3-dihydroxy-3-methylpentanoate = (S)-3-methyl-2-oxopentanoate + H2O. Its pathway is amino-acid biosynthesis; L-isoleucine biosynthesis; L-isoleucine from 2-oxobutanoate: step 3/4. The protein operates within amino-acid biosynthesis; L-valine biosynthesis; L-valine from pyruvate: step 3/4. In terms of biological role, functions in the biosynthesis of branched-chain amino acids. Catalyzes the dehydration of (2R,3R)-2,3-dihydroxy-3-methylpentanoate (2,3-dihydroxy-3-methylvalerate) into 2-oxo-3-methylpentanoate (2-oxo-3-methylvalerate) and of (2R)-2,3-dihydroxy-3-methylbutanoate (2,3-dihydroxyisovalerate) into 2-oxo-3-methylbutanoate (2-oxoisovalerate), the penultimate precursor to L-isoleucine and L-valine, respectively. The protein is Dihydroxy-acid dehydratase of Bacillus cereus (strain ATCC 10987 / NRS 248).